A 209-amino-acid polypeptide reads, in one-letter code: Uracil phosphoribosyltransferase (209 aa).

5-phospho-alpha-D-ribose 1-diphosphate is bound by residues R79, R104, and 131 to 139 (DPMLATGGS). Uracil-binding positions include I194 and 199 to 201 (GDA). Residue D200 participates in 5-phospho-alpha-D-ribose 1-diphosphate binding.

Belongs to the UPRTase family. Homodimer. Requires Mg(2+) as cofactor.

The catalysed reaction is UMP + diphosphate = 5-phospho-alpha-D-ribose 1-diphosphate + uracil. It participates in pyrimidine metabolism; UMP biosynthesis via salvage pathway; UMP from uracil: step 1/1. With respect to regulation, allosterically activated by GTP. In terms of biological role, catalyzes the conversion of uracil and 5-phospho-alpha-D-ribose 1-diphosphate (PRPP) to UMP and diphosphate. In Bacillus caldolyticus, this protein is Uracil phosphoribosyltransferase.